We begin with the raw amino-acid sequence, 1485 residues long: DNA topoisomerase 2 (1485 aa).

Residues 1-16 (MSIDADFSDYEDEASG) are compositionally biased toward acidic residues. The interval 1–76 (MSIDADFSDY…NGNGNSNVST (76 aa)) is disordered. Over residues 46–59 (DLRQTSLTSMTASE) the composition is skewed to polar residues. Low complexity predominate over residues 64–76 (VTNNGNGNSNVST). ATP contacts are provided by residues asparagine 136, asparagine 165, 193–195 (SSN), and 206–213 (GRNGYGAK). The interval 388–392 (KKENK) is interaction with DNA. ATP is bound at residue 421–423 (QTK). A Toprim domain is found at 499–613 (CVLILTEGDS…SLLQIPGFLI (115 aa)). Mg(2+) is bound by residues glutamate 505, aspartate 582, and aspartate 584. The region spanning 745–1195 (IPSVVDGLKP…TPKELWLHDL (451 aa)) is the Topo IIA-type catalytic domain. The active-site O-(5'-phospho-DNA)-tyrosine intermediate is tyrosine 835. The interaction with DNA stretch occupies residues 1019-1028 (KLSRTQATSN). Positions 1216–1225 (EEQSSRDFVN) are enriched in basic and acidic residues. The tract at residues 1216 to 1485 (EEQSSRDFVN…EDVDDYDESD (270 aa)) is disordered. The span at 1226 to 1242 (RTKKKPRGKSTGTRKPR) shows a compositional bias: basic residues. The span at 1260-1273 (ESKPSTTNRKQQTL) shows a compositional bias: polar residues. Positions 1278–1307 (ASKEPEKSSDINIVKTEDNSHGLSVEENRI) are enriched in basic and acidic residues. Serine 1310 and serine 1345 each carry phosphoserine. The span at 1387–1396 (AKNKGKKASS) shows a compositional bias: basic residues. Positions 1413 to 1425 (GSSSTPKASSTNA) are enriched in polar residues. Serine 1433 bears the Phosphoserine mark. The span at 1473 to 1485 (DNDEDVDDYDESD) shows a compositional bias: acidic residues.

Belongs to the type II topoisomerase family. As to quaternary structure, homodimer. It depends on Mg(2+) as a cofactor. Mn(2+) is required as a cofactor. Requires Ca(2+) as cofactor. Phosphorylated at multiple sites at both extremities of the protein.

It localises to the nucleus. It catalyses the reaction ATP-dependent breakage, passage and rejoining of double-stranded DNA.. Its function is as follows. Control of topological states of DNA by transient breakage and subsequent rejoining of DNA strands. Topoisomerase II makes double-strand breaks. The polypeptide is DNA topoisomerase 2 (top2) (Schizosaccharomyces pombe (strain 972 / ATCC 24843) (Fission yeast)).